We begin with the raw amino-acid sequence, 248 residues long: UPF0524 protein C3orf70 homolog (248 aa).

The segment at 169-248 (KESDTPKLGH…EVIETMETTV (80 aa)) is disordered. Residues 200-227 (SCDEDTEEGAELSSEEDYSPESSWEPDE) show a composition bias toward acidic residues.

This sequence belongs to the UPF0524 family.

In terms of biological role, may play a role in neuronal and neurobehavioral development. This chain is UPF0524 protein C3orf70 homolog, found in Mus musculus (Mouse).